The chain runs to 459 residues: ATP-dependent protease ATPase subunit HslU (459 aa).

ATP is bound by residues Val26, Gly68 to Glu73, Asp271, Glu337, and Arg409.

Belongs to the ClpX chaperone family. HslU subfamily. In terms of assembly, a double ring-shaped homohexamer of HslV is capped on each side by a ring-shaped HslU homohexamer. The assembly of the HslU/HslV complex is dependent on binding of ATP.

The protein localises to the cytoplasm. In terms of biological role, ATPase subunit of a proteasome-like degradation complex; this subunit has chaperone activity. The binding of ATP and its subsequent hydrolysis by HslU are essential for unfolding of protein substrates subsequently hydrolyzed by HslV. HslU recognizes the N-terminal part of its protein substrates and unfolds these before they are guided to HslV for hydrolysis. The polypeptide is ATP-dependent protease ATPase subunit HslU (Xylella fastidiosa (strain M12)).